The following is a 646-amino-acid chain: Phosphomethylpyrimidine synthase (646 aa).

Residues 1–13 (MNIRSNPDTTRPA) show a composition bias toward polar residues. The tract at residues 1-21 (MNIRSNPDTTRPAVTTGGLPS) is disordered. Substrate contacts are provided by residues Asn221, Met250, Tyr279, His315, 335–337 (SRG), 376–379 (DGLR), and Glu415. Zn(2+) is bound at residue His419. Tyr442 contacts substrate. Zn(2+) is bound at residue His483. 3 residues coordinate [4Fe-4S] cluster: Cys563, Cys566, and Cys571.

Belongs to the ThiC family. In terms of assembly, homodimer. It depends on [4Fe-4S] cluster as a cofactor.

The catalysed reaction is 5-amino-1-(5-phospho-beta-D-ribosyl)imidazole + S-adenosyl-L-methionine = 4-amino-2-methyl-5-(phosphooxymethyl)pyrimidine + CO + 5'-deoxyadenosine + formate + L-methionine + 3 H(+). Its pathway is cofactor biosynthesis; thiamine diphosphate biosynthesis. Functionally, catalyzes the synthesis of the hydroxymethylpyrimidine phosphate (HMP-P) moiety of thiamine from aminoimidazole ribotide (AIR) in a radical S-adenosyl-L-methionine (SAM)-dependent reaction. The chain is Phosphomethylpyrimidine synthase from Rhodopseudomonas palustris (strain HaA2).